Here is a 278-residue protein sequence, read N- to C-terminus: MKFGKSLSSQIVEMQPEWRDNFLSYKDLKKRLNLISGGAAGERASKRRRVGGATAVTVTAAAAGGMTLEQAGFVGLLDAELDKFNFFFLEKEEEYVIKQKELRERKMASAEEVMRVRKEIVDLHGEMVLLENYSALNYTGLVKILKKYDKRTGSMIRLPFVQKVLQQPFFTTDLLYKLVKECEEMLDQLMPTNEHSVASEDGKDDSEGEEKGSKPSSSSSANGGAVPGEAEDERSTDMKSTVTAALRALREIRSGSSTVSVFSLPPLHGSNGQDEPGR.

The SPX domain occupies 1–162 (MKFGKSLSSQ…GSMIRLPFVQ (162 aa)). 2 disordered regions span residues 191-242 (PTNE…KSTV) and 255-278 (GSSTVSVFSLPPLHGSNGQDEPGR).

Interacts (via SPX domain) with PHR2 (via C-terminus). Interacts with RLI1 in the nucleus to prevents its positive regulation of leaf inclination during phosphate (Pi) starvation.

It localises to the nucleus. Functionally, inhibits PHR2 DNA-binding activity via a phosphate (Pi)-dependent protein interaction. Together with SPX1, plays a negative role in the regulation of leaf inclination by preventing RLI1 transcription factor activity in Pi depleted conditions. The sequence is that of SPX domain-containing protein 2 from Oryza sativa subsp. indica (Rice).